The sequence spans 1166 residues: Peroxisomal ATPase PEX6 (1166 aa).

This sequence belongs to the AAA ATPase family. Interacts with PEX1; forming the PEX1-PEX6 AAA ATPase complex, which is composed of a heterohexamer formed by a trimer of PEX1-PEX6 dimers.

It is found in the membrane. It carries out the reaction ATP + H2O = ADP + phosphate + H(+). Component of the PEX1-PEX6 AAA ATPase complex involved in peroxisome biosynthesis. The complex acts as a protein dislocase complex that mediates the ATP-dependent extraction of the PEX5 receptor from peroxisomal membranes, an essential step for PEX5 recycling. Specifically recognizes PEX5 monoubiquitinated at 'Cys-6', and pulls it out of the peroxisome lumen through the PEX2-PEX10-PEX12 retrotranslocation channel. Extraction by the PEX1-PEX6 AAA ATPase complex is accompanied by unfolding of the TPR repeats and release of bound cargo from PEX5. This chain is Peroxisomal ATPase PEX6, found in Komagataella phaffii (strain GS115 / ATCC 20864) (Yeast).